A 214-amino-acid polypeptide reads, in one-letter code: Thymidylate kinase (214 aa).

15–22 (GLEGAGKT) contacts ATP.

It belongs to the thymidylate kinase family.

It catalyses the reaction dTMP + ATP = dTDP + ADP. Its function is as follows. Phosphorylation of dTMP to form dTDP in both de novo and salvage pathways of dTTP synthesis. This is Thymidylate kinase from Haemophilus ducreyi (strain 35000HP / ATCC 700724).